The sequence spans 74 residues: ATP synthase subunit c (74 aa).

The next 2 helical transmembrane spans lie at Phe8–Ile28 and Ile52–Ile72.

It belongs to the ATPase C chain family. F-type ATPases have 2 components, F(1) - the catalytic core - and F(0) - the membrane proton channel. F(1) has five subunits: alpha(3), beta(3), gamma(1), delta(1), epsilon(1). F(0) has three main subunits: a(1), b(2) and c(10-14). The alpha and beta chains form an alternating ring which encloses part of the gamma chain. F(1) is attached to F(0) by a central stalk formed by the gamma and epsilon chains, while a peripheral stalk is formed by the delta and b chains.

The protein localises to the cell inner membrane. Functionally, f(1)F(0) ATP synthase produces ATP from ADP in the presence of a proton or sodium gradient. F-type ATPases consist of two structural domains, F(1) containing the extramembraneous catalytic core and F(0) containing the membrane proton channel, linked together by a central stalk and a peripheral stalk. During catalysis, ATP synthesis in the catalytic domain of F(1) is coupled via a rotary mechanism of the central stalk subunits to proton translocation. Key component of the F(0) channel; it plays a direct role in translocation across the membrane. A homomeric c-ring of between 10-14 subunits forms the central stalk rotor element with the F(1) delta and epsilon subunits. The sequence is that of ATP synthase subunit c from Rickettsia bellii (strain RML369-C).